A 573-amino-acid polypeptide reads, in one-letter code: Cytosolic 5'-nucleotidase 1B (573 aa).

Residues 1–11 (MSQTSLKHKKK) show a composition bias toward basic residues. 2 disordered regions span residues 1-200 (MSQT…PPTE) and 218-238 (EPEY…EEDE). The segment covering 12–35 (NEPGMRYSKESLDAEKRKDSDKTG) has biased composition (basic and acidic residues). Over residues 60-73 (NQWSRTSRSPSTGA) the composition is skewed to polar residues. Low complexity predominate over residues 93 to 105 (SSTTSRTSSASPS). Over residues 115–136 (TSEKSSIQQTPQNRPITQLESQ) the composition is skewed to polar residues. Basic and acidic residues-rich tracts occupy residues 161–174 (WAHR…DLQL) and 182–194 (DSRE…REYP). The Nucleophile role is filled by aspartate 428.

It belongs to the 5'-nucleotidase type 3 family. Mg(2+) is required as a cofactor. Expressed at highest levels in testis. Also expressed in brain, skeletal muscle, kidney and heart.

It is found in the cytoplasm. The catalysed reaction is a ribonucleoside 5'-phosphate + H2O = a ribonucleoside + phosphate. It catalyses the reaction AMP + H2O = adenosine + phosphate. With respect to regulation, activated by ADP. Its function is as follows. Catalyzes the hydrolysis of nucleotide monophosphates, releasing inorganic phosphate and the corresponding nucleoside, AMP is the major substrate. The sequence is that of Cytosolic 5'-nucleotidase 1B (Nt5c1b) from Mus musculus (Mouse).